The primary structure comprises 172 residues: MRNLILVGPMGAGKSTIGRLLAKELRLPFKDSDKEIELRTGANIPWIFDKEGEPGFRDREQAMIAELCAFDGVVLATGGGAVMRDANRKALHEGGRVVYLHASVEQQVGRTSRDRNRPLLRTANPEKTLRDLLAIRDPLYREIADLVVETDERPPRMVVLDILDRLAQLPPR.

Gly-11–Thr-16 is an ATP binding site. Ser-15 lines the Mg(2+) pocket. Residues Asp-33, Arg-57, and Gly-79 each contribute to the substrate site. Arg-117 is a binding site for ATP. Arg-136 is a substrate binding site. An ATP-binding site is contributed by Arg-153.

This sequence belongs to the shikimate kinase family. As to quaternary structure, monomer. It depends on Mg(2+) as a cofactor.

It localises to the cytoplasm. It catalyses the reaction shikimate + ATP = 3-phosphoshikimate + ADP + H(+). The protein operates within metabolic intermediate biosynthesis; chorismate biosynthesis; chorismate from D-erythrose 4-phosphate and phosphoenolpyruvate: step 5/7. Its function is as follows. Catalyzes the specific phosphorylation of the 3-hydroxyl group of shikimic acid using ATP as a cosubstrate. The polypeptide is Shikimate kinase (Pseudomonas fluorescens (strain Pf0-1)).